The chain runs to 312 residues: Src-like-adapter (312 aa).

The disordered stretch occupies residues 1–33 (MLCRLPGPSTSRGEKEMGNSMKSTPAPLERPLS). Residues 38–98 (LESDFLAVLN…PGICVARVYH (61 aa)) form the SH3 domain. Positions 100-191 (WLFEGLGRDK…GLCCVLTTPC (92 aa)) constitute an SH2 domain. Positions 206–312 (CTSPGSPVTL…TQKTKALTAT (107 aa)) are SLA C-terminal. S274 bears the Phosphoserine mark.

Homodimer. Interacts with phosphorylated CBL, SYK and LAT. Homodimerization and interaction with phosphorylated CBL occurs via its C-terminal domain. Interacts with PDGFRB and EPHA2. Interacts with phosphorylated proteins ZAP70; CD3Z; VAV1 and LCP2 via its SH2 domain. Phosphorylated.

The protein localises to the cytoplasm. It is found in the endosome. Functionally, adapter protein, which negatively regulates T-cell receptor (TCR) signaling. Inhibits T-cell antigen-receptor induced activation of nuclear factor of activated T-cells. Involved in the negative regulation of positive selection and mitosis of T-cells. May act by linking signaling proteins such as ZAP70 with CBL, leading to a CBL dependent degradation of signaling proteins. The polypeptide is Src-like-adapter (Sla) (Rattus norvegicus (Rat)).